A 373-amino-acid polypeptide reads, in one-letter code: Queuine tRNA-ribosyltransferase (373 aa).

Asp-94 (proton acceptor) is an active-site residue. Substrate-binding positions include 94–98 (DSGGF), Asp-148, Gln-190, and Gly-217. The interval 248-254 (GVGSPDC) is RNA binding. Asp-267 functions as the Nucleophile in the catalytic mechanism. The interval 272–276 (TRIAR) is RNA binding; important for wobble base 34 recognition. Residues Cys-305, Cys-307, Cys-310, and His-336 each contribute to the Zn(2+) site.

It belongs to the queuine tRNA-ribosyltransferase family. In terms of assembly, homodimer. Within each dimer, one monomer is responsible for RNA recognition and catalysis, while the other monomer binds to the replacement base PreQ1. Requires Zn(2+) as cofactor.

The catalysed reaction is 7-aminomethyl-7-carbaguanine + guanosine(34) in tRNA = 7-aminomethyl-7-carbaguanosine(34) in tRNA + guanine. The protein operates within tRNA modification; tRNA-queuosine biosynthesis. In terms of biological role, catalyzes the base-exchange of a guanine (G) residue with the queuine precursor 7-aminomethyl-7-deazaguanine (PreQ1) at position 34 (anticodon wobble position) in tRNAs with GU(N) anticodons (tRNA-Asp, -Asn, -His and -Tyr). Catalysis occurs through a double-displacement mechanism. The nucleophile active site attacks the C1' of nucleotide 34 to detach the guanine base from the RNA, forming a covalent enzyme-RNA intermediate. The proton acceptor active site deprotonates the incoming PreQ1, allowing a nucleophilic attack on the C1' of the ribose to form the product. After dissociation, two additional enzymatic reactions on the tRNA convert PreQ1 to queuine (Q), resulting in the hypermodified nucleoside queuosine (7-(((4,5-cis-dihydroxy-2-cyclopenten-1-yl)amino)methyl)-7-deazaguanosine). This Moorella thermoacetica (strain ATCC 39073 / JCM 9320) protein is Queuine tRNA-ribosyltransferase.